A 254-amino-acid polypeptide reads, in one-letter code: 3-deoxy-manno-octulosonate cytidylyltransferase (254 aa).

This sequence belongs to the KdsB family.

It localises to the cytoplasm. It catalyses the reaction 3-deoxy-alpha-D-manno-oct-2-ulosonate + CTP = CMP-3-deoxy-beta-D-manno-octulosonate + diphosphate. It participates in nucleotide-sugar biosynthesis; CMP-3-deoxy-D-manno-octulosonate biosynthesis; CMP-3-deoxy-D-manno-octulosonate from 3-deoxy-D-manno-octulosonate and CTP: step 1/1. It functions in the pathway bacterial outer membrane biogenesis; lipopolysaccharide biosynthesis. Its function is as follows. Activates KDO (a required 8-carbon sugar) for incorporation into bacterial lipopolysaccharide in Gram-negative bacteria. The polypeptide is 3-deoxy-manno-octulosonate cytidylyltransferase (Pseudomonas putida (strain W619)).